Reading from the N-terminus, the 316-residue chain is Ecto-ADP-ribosyltransferase 5 (316 aa).

A signal peptide spans 1–23 (MIQATLLISLSCLSFYTLGSGVR). The cysteines at positions 50 and 266 are disulfide-linked. Asn68 is a glycosylation site (N-linked (GlcNAc...) asparagine). Positions 70–261 (TRLRESWETA…MTLSSSDQMC (192 aa)) constitute a TR mART core domain. Tyr107 is an NAD(+) binding site. An N-linked (GlcNAc...) asparagine glycan is attached at Asn109. NAD(+) is bound by residues Arg168 and Gln188. The active site involves Arg168. Residue Ser191 is part of the active site. Ser222 serves as a coordination point for NAD(+). Glu229 is a catalytic residue. Residues Asn242 and Asn248 are each glycosylated (N-linked (GlcNAc...) asparagine).

The protein belongs to the Arg-specific ADP-ribosyltransferase family.

The protein resides in the secreted. It is found in the membrane. It catalyses the reaction L-arginyl-[protein] + NAD(+) = N(omega)-(ADP-D-ribosyl)-L-arginyl-[protein] + nicotinamide + H(+). The protein is Ecto-ADP-ribosyltransferase 5 (ART5) of Bos taurus (Bovine).